The sequence spans 541 residues: Arginine-containing cyclodipeptide synthase avaA (541 aa).

The Conserved DDXXE motif signature appears at 428–432 (DDIAE).

The protein belongs to the arginine-containing cyclodipeptide synthase family.

The catalysed reaction is L-tryptophyl-tRNA(Trp) + L-arginyl-tRNA(Arg) = cyclo(L-arginyl-L-tryptophyl) + tRNA(Trp) + tRNA(Arg) + H(+). The protein operates within secondary metabolite biosynthesis. Arginine-containing cyclodipeptide synthase; part of the cluster that mediates the biosynthesis of a highly modified cyclo-arginine-tryptophan dipeptide (cRW). Within the pathway, avaA acts as the scaffold-generating enzyme and is responsible for formation of the cyclo-Arg-Trp diketopiperazine (cRW) from L-arginyl-tRNA(Arg) + L-tryptophanyl-tRNA(Trp). AvaB then acts as a multifunctional flavoenzyme that is responsible for generating the cyclo-Arg-formylkynurenine DKP, which can be deformylated by avaC. AvaB then catalyzes an additional N-oxidation followed by cyclization and dehydration. The next step is an N-acetylation of the guanidine group catalyzed by the arginine N-acetyltransferase AvaD. The role of the additional enzymes identified within the ava cluster still have to be determined. The sequence is that of Arginine-containing cyclodipeptide synthase avaA from Aspergillus versicolor.